A 432-amino-acid chain; its full sequence is Methylenetetrahydrofolate--tRNA-(uracil-5-)-methyltransferase TrmFO (432 aa).

7-12 (GGGLAG) is an FAD binding site.

This sequence belongs to the MnmG family. TrmFO subfamily. The cofactor is FAD.

The protein localises to the cytoplasm. It catalyses the reaction uridine(54) in tRNA + (6R)-5,10-methylene-5,6,7,8-tetrahydrofolate + NADH + H(+) = 5-methyluridine(54) in tRNA + (6S)-5,6,7,8-tetrahydrofolate + NAD(+). The enzyme catalyses uridine(54) in tRNA + (6R)-5,10-methylene-5,6,7,8-tetrahydrofolate + NADPH + H(+) = 5-methyluridine(54) in tRNA + (6S)-5,6,7,8-tetrahydrofolate + NADP(+). Functionally, catalyzes the folate-dependent formation of 5-methyl-uridine at position 54 (M-5-U54) in all tRNAs. The polypeptide is Methylenetetrahydrofolate--tRNA-(uracil-5-)-methyltransferase TrmFO (Coprothermobacter proteolyticus (strain ATCC 35245 / DSM 5265 / OCM 4 / BT)).